Consider the following 143-residue polypeptide: MGKNHFLKDFSALPEDVLIENERGITLLGYPLFSPKILLPHVDPPQFQRLNTENGSLIALSKNTISNFIELYPIDLSTERTAGSSSSQMTKWFVLMDYKEKYDIDDQGWCYSWNFNNSRWKSKNGLVRRRVWVRLPTTSHGLD.

This sequence belongs to the SPO73 family. As to quaternary structure, interacts with SPO71.

It is found in the cytoplasm. Its subcellular location is the prospore membrane. Required for spore wall assembly and ascus formation. Involved in the formation and elongation of prospore membranes. The polypeptide is Sporulation-specific protein 73 (Saccharomyces cerevisiae (strain ATCC 204508 / S288c) (Baker's yeast)).